Here is a 451-residue protein sequence, read N- to C-terminus: Proline--tRNA ligase (451 aa).

Belongs to the class-II aminoacyl-tRNA synthetase family. ProS type 2 subfamily. In terms of assembly, homodimer.

Its subcellular location is the cytoplasm. It catalyses the reaction tRNA(Pro) + L-proline + ATP = L-prolyl-tRNA(Pro) + AMP + diphosphate. Its function is as follows. Catalyzes the attachment of proline to tRNA(Pro) in a two-step reaction: proline is first activated by ATP to form Pro-AMP and then transferred to the acceptor end of tRNA(Pro). In Ruegeria sp. (strain TM1040) (Silicibacter sp.), this protein is Proline--tRNA ligase.